Consider the following 532-residue polypeptide: MNCLPDELLVQILSFLPTKEATSTSLLSKRWRTLFTLSPNLDFDNSLLLQSKKRKWNMRNIQKSFVGFVDSTLALQGGKGIKSFSLKFKETLGDVNGEVDVNRWICNALEHGVSELHLRIDYTKRCHLPSEIFTSTKLVKLSLVTQSCFPVVPNCISLPSLKVLFLDSIWFEVPQFLIFLTACPALEDLTIYQKPHSVGMPYHISSKTIKRLSVTYTCGYFVDYGLKLFNTPSVVDLYYSDYVRHKYPHMNLDSLPKATLDIHFLDDNAANVTELLSGIRNVKTLHLTSSTVKVILLCCKGEIPMFENLINLKFSGKTRQWKFLLPLLLEICPNLTTLVLSGLDQNWFVGFRTPPNNQVKMLSIMQYQGSERELKLISYFVLKMECLQVVKVYVSSPMNDLKKMQLTEDLLKLPKASPKLNIQVLVPSDTYLPALKVLFLDSVWFDFHQFANVFFPACPALEDFAIHIKSFRRKARSENELEHISHFSLKMEFLEVLKVYVALTMDDTKKVELTKELLKLPISSSKLIIQVM.

The F-box domain occupies methionine 1–serine 46. LRR repeat units follow at residues valine 113–serine 135, isoleucine 279–methionine 305, and methionine 398–leucine 420.

This chain is Putative F-box/LRR-repeat protein At3g42770, found in Arabidopsis thaliana (Mouse-ear cress).